The following is a 254-amino-acid chain: 3-deoxy-manno-octulosonate cytidylyltransferase (254 aa).

This sequence belongs to the KdsB family.

It localises to the cytoplasm. It carries out the reaction 3-deoxy-alpha-D-manno-oct-2-ulosonate + CTP = CMP-3-deoxy-beta-D-manno-octulosonate + diphosphate. Its pathway is nucleotide-sugar biosynthesis; CMP-3-deoxy-D-manno-octulosonate biosynthesis; CMP-3-deoxy-D-manno-octulosonate from 3-deoxy-D-manno-octulosonate and CTP: step 1/1. The protein operates within bacterial outer membrane biogenesis; lipopolysaccharide biosynthesis. Its function is as follows. Activates KDO (a required 8-carbon sugar) for incorporation into bacterial lipopolysaccharide in Gram-negative bacteria. This chain is 3-deoxy-manno-octulosonate cytidylyltransferase, found in Porphyromonas gingivalis (strain ATCC BAA-308 / W83).